The primary structure comprises 499 residues: Fumarate hydratase 2 (499 aa).

The segment at alanine 19 to valine 51 is disordered. Residues leucine 23–threonine 45 are compositionally biased toward basic and acidic residues. Substrate-binding positions include serine 134–threonine 136, histidine 164–aspartate 167, serine 174–asparagine 176, and threonine 222. Histidine 223 serves as the catalytic Proton donor/acceptor. Serine 353 is a catalytic residue. Residues serine 354 and lysine 359–asparagine 361 contribute to the substrate site.

Belongs to the class-II fumarase/aspartase family. Fumarase subfamily. In terms of assembly, homotetramer.

The protein localises to the cytoplasm. It is found in the cytosol. The catalysed reaction is (S)-malate = fumarate + H2O. With respect to regulation, fumarate hydratase activity (fumarate to L-malate) is strongly inhibited by phosphoenolpyruvate, citrate, oxaloacetate, ATP and ADP. Malate dehydratase activity (malate to fumarate) is activated by oxaloacetate, Asn and Gln. Malate dehydratase activity (malate to fumarate) is inhibited by citrate, succinate, ADP and ATP. Its function is as follows. Cytosolic fumarate hydratase that catalyzes the reversible stereospecific interconversion of fumarate to L-malate. Catalyzes the dehydration of L-malate to fumarate in the cytosol: required for the massive fumarate accumulation during the day in plants grown under high nitrogen. Also required for acclimation of photosynthesis to cold: acts by mediating accumulation of fumarate at low temperature, leading to reduce accumulation of phosphorylated sugars. The polypeptide is Fumarate hydratase 2 (Arabidopsis thaliana (Mouse-ear cress)).